A 315-amino-acid chain; its full sequence is MQAPQPLIIAIVGPTAVGKTAFSLDLAQALNGEIVSVDSRLVYRGMDIGTAKPTPAEQALVKHHLIDVVNPDQEYSLATYQAAAYAAIAQIQQQAKQPILVGGTGQYMAALLEGWSIPEVAPNYELRARYEQQAASEGHAALHQQLQTIDPEAAKAIDPTNVRRVIRALEVFHETGQPISQLQQRNPPHYRILTLDLERPRDELYARIDQRVDLMMREGLIAEVWALIRQGYGWELPSMSGLGYAEFRPLWQGQQSAGACISQLKFNTHRFARKQGAWFRRLPKRVSLDARHTDLLAQVQELLAMPEHAPIHTDH.

13-20 (GPTAVGKT) is an ATP binding site. 15 to 20 (TAVGKT) contacts substrate. Residues 38–41 (DSRL) form an interaction with substrate tRNA region.

This sequence belongs to the IPP transferase family. In terms of assembly, monomer. The cofactor is Mg(2+).

It catalyses the reaction adenosine(37) in tRNA + dimethylallyl diphosphate = N(6)-dimethylallyladenosine(37) in tRNA + diphosphate. Its function is as follows. Catalyzes the transfer of a dimethylallyl group onto the adenine at position 37 in tRNAs that read codons beginning with uridine, leading to the formation of N6-(dimethylallyl)adenosine (i(6)A). The chain is tRNA dimethylallyltransferase from Herpetosiphon aurantiacus (strain ATCC 23779 / DSM 785 / 114-95).